The following is a 146-amino-acid chain: MSHKILLVNGPNLNLLGRREPSVYGHQTLADIVAELKQQAKLAEVELEHIQSNAEFELINAIHATDAQMIIINPAAFTHTSVALRDALLGVAIPFFEVHLSNVHAREAFRHHSYFSDKAIGVICGFGSQGYEFALAAAIKRLNQPQ.

Y24 serves as the catalytic Proton acceptor. Positions 73, 79, and 86 each coordinate substrate. H99 (proton donor) is an active-site residue. Residues L100–S101 and R110 contribute to the substrate site.

It belongs to the type-II 3-dehydroquinase family. As to quaternary structure, homododecamer.

It catalyses the reaction 3-dehydroquinate = 3-dehydroshikimate + H2O. It functions in the pathway metabolic intermediate biosynthesis; chorismate biosynthesis; chorismate from D-erythrose 4-phosphate and phosphoenolpyruvate: step 3/7. In terms of biological role, catalyzes a trans-dehydration via an enolate intermediate. The protein is 3-dehydroquinate dehydratase of Shewanella baltica (strain OS185).